The chain runs to 1535 residues: ABC multidrug transporter atrF (1535 aa).

The interval 1–115 (MADDHRQPEA…DEQASSTDEY (115 aa)) is disordered. Asparagine 33 is a glycosylation site (N-linked (GlcNAc...) asparagine). Positions 34–45 (TTSTSETDASAD) are enriched in low complexity. Positions 46–76 (ADARWGERNQGDPVSRRGAMEEFEEMRREVT) are enriched in basic and acidic residues. A compositionally biased stretch (basic residues) spans 79–93 (SLHRTRSAKDARRRS). Asparagine 149, asparagine 274, asparagine 287, and asparagine 351 each carry an N-linked (GlcNAc...) asparagine glycan. The region spanning 185–427 (VPALHFGKRP…FVDLGFYCPE (243 aa)) is the ABC transporter 1 domain. 7 helical membrane passes run 540 to 560 (LYTK…LFYG), 573 to 593 (GALF…MPAV), 618 to 638 (VVVD…IVYF), 646 to 666 (ASKF…ITSL), 680 to 700 (AVRF…YVIP), 703 to 723 (GLID…LSYS), and 791 to 811 (FGVV…AAEV). Positions 834 to 868 (KAQNGKGNDEEQVQNTGDNAALSRGEAKSSSSGEA) are disordered. In terms of domain architecture, ABC transporter 2 spans 879–1117 (FTWSNVEYTV…DVIKYFADRG (239 aa)). An N-linked (GlcNAc...) asparagine glycan is attached at asparagine 892. 915-922 (GASGAGKT) is a binding site for ATP. The next 6 helical transmembrane spans lie at 1212–1232 (YGKL…FWML), 1246–1266 (IFLI…KFYI), 1295–1315 (IPMA…PVGF), 1320–1340 (SSAG…ASWG), 1342–1362 (WICA…FFFV), and 1384–1406 (WMYY…FPSV). An N-linked (GlcNAc...) asparagine glycan is attached at asparagine 1459. Transmembrane regions (helical) follow at residues 1477 to 1497 (CFGI…FFIY) and 1503 to 1523 (GWSF…EGVK).

The protein belongs to the ABC transporter superfamily. ABCG family. PDR (TC 3.A.1.205) subfamily.

It localises to the cell membrane. The catalysed reaction is voriconazole(in) + ATP + H2O = voriconazole(out) + ADP + phosphate + H(+). Pleiotropic ABC efflux transporter involved in the basal level of azole susceptibility. Confers resistance to voriconazole. The protein is ABC multidrug transporter atrF of Aspergillus flavus (strain ATCC 200026 / FGSC A1120 / IAM 13836 / NRRL 3357 / JCM 12722 / SRRC 167).